We begin with the raw amino-acid sequence, 401 residues long: Na(+)/H(+) antiporter NhaA 2 (401 aa).

The next 11 membrane-spanning stretches (helical) occupy residues 13–33 (AAGGVLLVIAAAIAMVLANSP), 59–79 (LLLWVNDGLMAIFFFLVGLEV), 94–114 (ITLPAVAAIAGIVFPALIYVW), 125–145 (GWAIPSATDIAFAVGVFTIFG), 154–174 (LFLLSVAIFDDIGAIVIIALF), 178–198 (DLSTTSLIVACAGFVALFLLN), 209–229 (VLIGVVVWAAVLKSGVHATLA), 260–280 (WVGFVVLPIFAFANAGVSLFG), 292–312 (LGIAVGLFVGKQLGIFGVCWI), 332–352 (GVSLLCGIGFTMSLFIGSLAF), and 363–383 (VKAGVLLGSLVSAVLGAVLLA).

The protein belongs to the NhaA Na(+)/H(+) (TC 2.A.33) antiporter family.

It is found in the cell inner membrane. The catalysed reaction is Na(+)(in) + 2 H(+)(out) = Na(+)(out) + 2 H(+)(in). Functionally, na(+)/H(+) antiporter that extrudes sodium in exchange for external protons. In Pseudoalteromonas atlantica (strain T6c / ATCC BAA-1087), this protein is Na(+)/H(+) antiporter NhaA 2.